Reading from the N-terminus, the 491-residue chain is MTDLTSLTLAEARDGLANKSFTALELTDAHLEAIERARVLNAYVLETPAQARAMAREADVRIAKGEGGPLNGLPLGVKDLFATEGTRTTACSQILDDFKPPYESTVTSQLWRDGAVMLGKLNNDEFAMGSSNETSRFGPVVNPWRRQGSDAKLVPGGSSGGSASAVAAGLCLGATATDTGGSIRQPAAFTGTVGIKPTYGRCSRWGIVAFASSLDQAGPIARTVRDAAILMHSMAGHDPKDTTSVDRPVPDYEAAVGKSVKGMKIGIPKEYRLDGMPAEIEKLWTQGAGWLKSAGAELVEVSLPHTKYALPAYYIVAPAEASSNLARYDGVRYGARVEGRNIVEMYENTRAKGFGAEVRRRIMIGTYVLSAGYYDAYYLRAQKVRTLIKKDFEDCYAAGIDAILTPATPSAAFGIGEKAGADPIEMYLNDIFTVTANMAGLPGIAVPAGRDAQGLPLGLQLVGRPFDEETLLSLGEVIEQAAGRFTPERWW.

Active-site charge relay system residues include Lys-78 and Ser-158. Ser-182 functions as the Acyl-ester intermediate in the catalytic mechanism.

This sequence belongs to the amidase family. GatA subfamily. Heterotrimer of A, B and C subunits.

The enzyme catalyses L-glutamyl-tRNA(Gln) + L-glutamine + ATP + H2O = L-glutaminyl-tRNA(Gln) + L-glutamate + ADP + phosphate + H(+). Functionally, allows the formation of correctly charged Gln-tRNA(Gln) through the transamidation of misacylated Glu-tRNA(Gln) in organisms which lack glutaminyl-tRNA synthetase. The reaction takes place in the presence of glutamine and ATP through an activated gamma-phospho-Glu-tRNA(Gln). The protein is Glutamyl-tRNA(Gln) amidotransferase subunit A of Nitrobacter hamburgensis (strain DSM 10229 / NCIMB 13809 / X14).